Here is a 556-residue protein sequence, read N- to C-terminus: Glypican-4 (556 aa).

The first 18 residues, 1 to 18, serve as a signal peptide directing secretion; that stretch reads MARFGLPALLCTLAVLSA. Residue Ser357 is modified to Phosphoserine. Ser494, Ser498, and Ser500 each carry an O-linked (Xyl...) (glycosaminoglycan) serine glycan. A glycan (N-linked (GlcNAc...) asparagine) is linked at Asn514. Ser529 carries GPI-anchor amidated serine lipidation. The propeptide at 530–556 is removed in mature form; it reads AGVRPGAQAYLLTVFCILFLVMQREWR.

The protein belongs to the glypican family.

Its subcellular location is the cell membrane. The protein resides in the secreted. It is found in the extracellular space. Functionally, cell surface proteoglycan that bears heparan sulfate. May be involved in the development of kidney tubules and of the central nervous system. This chain is Glypican-4 (GPC4), found in Homo sapiens (Human).